A 157-amino-acid chain; its full sequence is Protein Smg (157 aa).

The protein belongs to the Smg family.

The polypeptide is Protein Smg (Pectobacterium carotovorum subsp. carotovorum (strain PC1)).